Reading from the N-terminus, the 341-residue chain is Ferrochelatase (341 aa).

Fe cation-binding residues include histidine 189 and glutamate 293.

This sequence belongs to the ferrochelatase family.

The protein resides in the cytoplasm. It catalyses the reaction heme b + 2 H(+) = protoporphyrin IX + Fe(2+). It functions in the pathway porphyrin-containing compound metabolism; protoheme biosynthesis; protoheme from protoporphyrin-IX: step 1/1. Functionally, catalyzes the ferrous insertion into protoporphyrin IX. The polypeptide is Ferrochelatase (Pseudomonas fluorescens (strain Pf0-1)).